Reading from the N-terminus, the 808-residue chain is Probable inorganic carbon transporter subunit DabA (808 aa).

Cysteine 335, aspartate 337, histidine 497, and cysteine 512 together coordinate Zn(2+).

The protein belongs to the inorganic carbon transporter (TC 9.A.2) DabA family. As to quaternary structure, forms a complex with DabB. The cofactor is Zn(2+).

Its subcellular location is the cell inner membrane. Its function is as follows. Part of an energy-coupled inorganic carbon pump. This chain is Probable inorganic carbon transporter subunit DabA, found in Rhodopseudomonas palustris (strain TIE-1).